Here is a 61-residue protein sequence, read N- to C-terminus: Small ribosomal subunit protein uS14 (61 aa).

Cysteine 24, cysteine 27, cysteine 40, and cysteine 43 together coordinate Zn(2+).

Belongs to the universal ribosomal protein uS14 family. Zinc-binding uS14 subfamily. As to quaternary structure, part of the 30S ribosomal subunit. Contacts proteins S3 and S10. Zn(2+) is required as a cofactor.

Functionally, binds 16S rRNA, required for the assembly of 30S particles and may also be responsible for determining the conformation of the 16S rRNA at the A site. In Petrotoga mobilis (strain DSM 10674 / SJ95), this protein is Small ribosomal subunit protein uS14.